Here is a 607-residue protein sequence, read N- to C-terminus: Elongation factor 4 (607 aa).

The 183-residue stretch at 11–193 (SKIRNFSIIA…QIVEKVPAPT (183 aa)) folds into the tr-type G domain. Residues 23–28 (DHGKST) and 140–143 (NKID) each bind GTP.

This sequence belongs to the TRAFAC class translation factor GTPase superfamily. Classic translation factor GTPase family. LepA subfamily.

The protein resides in the cell membrane. It catalyses the reaction GTP + H2O = GDP + phosphate + H(+). In terms of biological role, required for accurate and efficient protein synthesis under certain stress conditions. May act as a fidelity factor of the translation reaction, by catalyzing a one-codon backward translocation of tRNAs on improperly translocated ribosomes. Back-translocation proceeds from a post-translocation (POST) complex to a pre-translocation (PRE) complex, thus giving elongation factor G a second chance to translocate the tRNAs correctly. Binds to ribosomes in a GTP-dependent manner. The polypeptide is Elongation factor 4 (Bacillus cereus (strain ZK / E33L)).